The chain runs to 823 residues: Nuclear pore complex protein Nup93-1 (823 aa).

It belongs to the nucleoporin interacting component (NIC) family. In terms of assembly, part of the nuclear pore complex (NPC). Interacts with msk (via C-terminus); this association might be facilitated by Nup75. Interacts with Mad (preferentially when phosphorylated). Interacts with Nup154 (via N-terminus). Interacts with the Polycomb group (PcG) proteins Pc and E(z).

The protein resides in the nucleus membrane. The protein localises to the nucleus. Its subcellular location is the nuclear pore complex. It is found in the nucleoplasm. In terms of biological role, required for nuclear pore complex assembly, maintenance and function. Required for nuclear import of phosphorylated Mad via importin msk. Has no role in classical nuclear localization signal (cNLS)-dependent nuclear import via importin-beta. Mediates the association between the nuclear pore complex and a subclass of silenced regions bound by Polycomb group (PcG) proteins, enables long-range interactions between Polycomb loci and contributes to repression of polycomb targets. Together with Nup62 and Nup154, contributes to karyosome morphology and chromatin organization including attachment to the nuclear envelope in oocytes and nurse cells. This Drosophila melanogaster (Fruit fly) protein is Nuclear pore complex protein Nup93-1.